A 592-amino-acid polypeptide reads, in one-letter code: Aspartate--tRNA ligase (592 aa).

L-aspartate is bound at residue glutamate 173. Residues 197 to 200 form an aspartate region; it reads QLFK. Arginine 219 lines the L-aspartate pocket. ATP is bound by residues 219–221 and glutamine 228; that span reads RDE. Histidine 448 is a binding site for L-aspartate. ATP is bound at residue glutamate 482. L-aspartate is bound at residue arginine 489. 534–537 contributes to the ATP binding site; sequence GLDR.

It belongs to the class-II aminoacyl-tRNA synthetase family. Type 1 subfamily. Homodimer.

It localises to the cytoplasm. It catalyses the reaction tRNA(Asp) + L-aspartate + ATP = L-aspartyl-tRNA(Asp) + AMP + diphosphate. In terms of biological role, catalyzes the attachment of L-aspartate to tRNA(Asp) in a two-step reaction: L-aspartate is first activated by ATP to form Asp-AMP and then transferred to the acceptor end of tRNA(Asp). This is Aspartate--tRNA ligase from Shewanella baltica (strain OS155 / ATCC BAA-1091).